Here is an 819-residue protein sequence, read N- to C-terminus: MTKPEIREPRAERYNPHAIEPKWQARWEQEGLYTFHEDPSKTKHYALTMFPYPSGNLHIGHWYANVAPDAHARWMRMRGYNVFFPMGFDAFGLPAENAAIKHGLNPATWTSSNIEHMLGQFKRMGTMIDWSRSLATCDPEYYRWNQWFFTEFFRRGLAYKKDGLVNWCPKDQTVLANEQVVDGRCERCGTPVERRNLSQWYLKITDYAEELLDFRDTDMPERVRAMQTNWIGKSVGAEITFDTPAGPETVFTTRPDTLMGATFLVLAPEHPKVPALTTPEQAEAVRAYVEAAGRKTDVERQQELGEKTGVFTGSYATHPVTGHQIPIWVADYVLMTYGTGSIMAVPAHDERDFDFARKFGLEIREVIRPEGGEPLDTTQAPYVGEGVIVNSGEFDGLPGGKASIAPIIARLEALGVAKPKTTYRLRDWLVSRQRYWGTPIPIVYCPDHGAQPVPADQLPVKLPENVEFMPTGQSPLKLDREWMRATCPVCGGPAERDTDTMDTFVDSSWYMYRYLSPHDDQHPFDPAHANLLPVDLYTGGIEHAILHLLYSRFWTKVMRDMGLTVQNEPFARLRNQGIILGEDGEKMSKSRGNVVDPDDLVREYGADTVRTYLMFIAPWELGGPWDPSGINGPAKWLSRVWALYFDEKAAGPEEKIGEADLRYAVHSTLKKVGADYERMSFNTIIAALMELTNTLVKAKRSPVFGTPAWEEALDIFNRMLAPVAPHIAEEIWRERGGTESVHLQAWPAVDEAAATRDTVTIGVQVSGKIRGEVQISKTATAEEALAAARAHPDVAKFTEGKQTIKEIYVPGRIINIVVK.

A 'HIGH' region motif is present at residues 51–61 (PYPSGNLHIGH). Positions 586–590 (KMSKS) match the 'KMSKS' region motif. Residue lysine 589 participates in ATP binding.

It belongs to the class-I aminoacyl-tRNA synthetase family.

It is found in the cytoplasm. It catalyses the reaction tRNA(Leu) + L-leucine + ATP = L-leucyl-tRNA(Leu) + AMP + diphosphate. In Deinococcus geothermalis (strain DSM 11300 / CIP 105573 / AG-3a), this protein is Leucine--tRNA ligase.